A 309-amino-acid polypeptide reads, in one-letter code: Protein FdhE (309 aa).

It belongs to the FdhE family.

Its subcellular location is the cytoplasm. Its function is as follows. Necessary for formate dehydrogenase activity. The polypeptide is Protein FdhE (Salmonella enteritidis PT4 (strain P125109)).